The following is a 638-amino-acid chain: MEQQQNSYDENQIQVLEGLEAVRKRPGMYIGSTNSKGLHHLVWEIVDNSIDEALAGYCTDINIQIEKDNSITVVDNGRGIPVGIHEKMGRPAVEVIMTVLHAGGKFDGSGYKVSGGLHGVGASVVNALSTELDVTVHRDGKIHRQTYKRGVPVTDLEIIGETDHTGTTTHFVPDPEIFSETTEYDYDLLANRVRELAFLTKGVNITIEDKREGQERKNEYHYEGGIKSYVEYLNRSKEVVHEEPIYIEGEKDGITVEVALQYNDSYTSNIYSFTNNINTYEGGTHEAGFKTGLTRVINDYARKKGLIKENDPNLSGDDVREGLTAIISIKHPDPQFEGQTKTKLGNSEARTITDTLFSTAMETFMLENPDAAKKIVDKGLMAARARMAAKKARELTRRKSALEISNLPGKLADCSSKDPSISELYIVEGDSAGGSAKQGRDRHFQAILPLRGKILNVEKARLDKILSNNEVRSMITALGTGIGEDFNLEKARYHKVVIMTDADVDGAHIRTLLLTFFYRYMRQIIENGYVYIAQPPLYKVQQGKRVEYAYNDKELEELLKTLPQTPKPGLQRYKGLGEMNATQLWETTMDPSSRTLLQVTLEDAMDADETFEMLMGDKVEPRRNFIEANARYVKNLDI.

The Toprim domain maps to 422 to 536 (SELYIVEGDS…NGYVYIAQPP (115 aa)). Positions 428, 501, and 503 each coordinate Mg(2+).

This sequence belongs to the type II topoisomerase GyrB family. Heterotetramer, composed of two GyrA and two GyrB chains. In the heterotetramer, GyrA contains the active site tyrosine that forms a transient covalent intermediate with DNA, while GyrB binds cofactors and catalyzes ATP hydrolysis. It depends on Mg(2+) as a cofactor. Mn(2+) serves as cofactor. The cofactor is Ca(2+).

The protein resides in the cytoplasm. The catalysed reaction is ATP-dependent breakage, passage and rejoining of double-stranded DNA.. Functionally, a type II topoisomerase that negatively supercoils closed circular double-stranded (ds) DNA in an ATP-dependent manner to modulate DNA topology and maintain chromosomes in an underwound state. Negative supercoiling favors strand separation, and DNA replication, transcription, recombination and repair, all of which involve strand separation. Also able to catalyze the interconversion of other topological isomers of dsDNA rings, including catenanes and knotted rings. Type II topoisomerases break and join 2 DNA strands simultaneously in an ATP-dependent manner. This Bacillus subtilis (strain 168) protein is DNA gyrase subunit B.